The following is a 182-amino-acid chain: Ribosome-recycling factor (182 aa).

Residues 136-156 are disordered; sequence IRKQEKNSDISKDESRDLQDK.

The protein belongs to the RRF family.

The protein resides in the cytoplasm. Responsible for the release of ribosomes from messenger RNA at the termination of protein biosynthesis. May increase the efficiency of translation by recycling ribosomes from one round of translation to another. This chain is Ribosome-recycling factor, found in Trichodesmium erythraeum (strain IMS101).